An 876-amino-acid polypeptide reads, in one-letter code: Paramyosin (876 aa).

The interval 1-28 is nonhelical region; sequence MSARSAKFMYRSGNAGASGDLSVEYGTD. The stretch at 29 to 855 forms a coiled coil; the sequence is LGALTRLEDK…IRAKHRSWVT (827 aa). The nonhelical region stretch occupies residues 856–876; that stretch reads TSQVPGGTRQVFVTQEEQSNY.

This sequence belongs to the paramyosin family. Homodimer.

It is found in the cytoplasm. The protein resides in the myofibril. Its function is as follows. Paramyosin is a major structural component of many thick filaments isolated from invertebrate muscles. This is Paramyosin from Sarcoptes scabiei (Itch mite).